The sequence spans 594 residues: Proteasome-associated ATPase (594 aa).

Positions 1 to 12 are enriched in polar residues; that stretch reads MTETSANKPENT. Positions 1–20 are disordered; sequence MTETSANKPENTQAHEGRDY. A coiled-coil region spans residues 18–71; that stretch reads RDYSVLERQFNVLRDKLRNVDRQLAAATQNNTKMTTTLQSAKAEILRLKSALEK. Residue 282-287 participates in ATP binding; that stretch reads GCGKTL. The docks into pockets in the proteasome alpha-ring stretch occupies residues 593–594; the sequence is YL.

It belongs to the AAA ATPase family. As to quaternary structure, homohexamer. Assembles into a hexameric ring structure that caps the 20S proteasome core. Strongly interacts with the prokaryotic ubiquitin-like protein Pup through a hydrophobic interface; the interacting region of ARC lies in its N-terminal coiled-coil domain. There is one Pup binding site per ARC hexamer ring. Upon ATP-binding, the C-terminus of ARC interacts with the alpha-rings of the proteasome core, possibly by binding to the intersubunit pockets.

It participates in protein degradation; proteasomal Pup-dependent pathway. Functionally, ATPase which is responsible for recognizing, binding, unfolding and translocation of pupylated proteins into the bacterial 20S proteasome core particle. May be essential for opening the gate of the 20S proteasome via an interaction with its C-terminus, thereby allowing substrate entry and access to the site of proteolysis. Thus, the C-termini of the proteasomal ATPase may function like a 'key in a lock' to induce gate opening and therefore regulate proteolysis. In Renibacterium salmoninarum (strain ATCC 33209 / DSM 20767 / JCM 11484 / NBRC 15589 / NCIMB 2235), this protein is Proteasome-associated ATPase.